A 275-amino-acid chain; its full sequence is Membrane protein insertase YidC 1 (275 aa).

Residues 1–25 (MRKVLRVKKNIKIARIVPLVLLLVA) form the signal peptide. A lipid anchor (N-palmitoyl cysteine) is attached at Cys-26. Cys-26 is lipidated: S-diacylglycerol cysteine. 5 consecutive transmembrane segments (helical) span residues 58 to 78 (SIGV…MPLF), 129 to 149 (YASL…FQAL), 171 to 191 (LYLL…LTNL), 198 to 216 (VMMT…FMGF), and 222 to 240 (VVLY…LLLL).

It belongs to the OXA1/ALB3/YidC family. Type 2 subfamily.

The protein resides in the cell membrane. Required for the insertion and/or proper folding and/or complex formation of integral membrane proteins into the membrane. Involved in integration of membrane proteins that insert both dependently and independently of the Sec translocase complex, as well as at least some lipoproteins. The protein is Membrane protein insertase YidC 1 of Streptococcus pyogenes serotype M6 (strain ATCC BAA-946 / MGAS10394).